A 194-amino-acid polypeptide reads, in one-letter code: Leucyl/phenylalanyl-tRNA--protein transferase (194 aa).

It belongs to the L/F-transferase family.

The protein localises to the cytoplasm. The catalysed reaction is N-terminal L-lysyl-[protein] + L-leucyl-tRNA(Leu) = N-terminal L-leucyl-L-lysyl-[protein] + tRNA(Leu) + H(+). The enzyme catalyses N-terminal L-arginyl-[protein] + L-leucyl-tRNA(Leu) = N-terminal L-leucyl-L-arginyl-[protein] + tRNA(Leu) + H(+). It carries out the reaction L-phenylalanyl-tRNA(Phe) + an N-terminal L-alpha-aminoacyl-[protein] = an N-terminal L-phenylalanyl-L-alpha-aminoacyl-[protein] + tRNA(Phe). Functionally, functions in the N-end rule pathway of protein degradation where it conjugates Leu, Phe and, less efficiently, Met from aminoacyl-tRNAs to the N-termini of proteins containing an N-terminal arginine or lysine. This chain is Leucyl/phenylalanyl-tRNA--protein transferase, found in Chlorobaculum tepidum (strain ATCC 49652 / DSM 12025 / NBRC 103806 / TLS) (Chlorobium tepidum).